The sequence spans 240 residues: Uridylate kinase (240 aa).

Residue 13 to 16 (KASG) coordinates ATP. Residues 21–26 (GSQGFG) form an involved in allosteric activation by GTP region. Residue Gly55 coordinates UMP. 2 residues coordinate ATP: Gly56 and Arg60. UMP is bound by residues Asp75 and 136–143 (TGNPFFTT). Positions 163, 164, 169, and 172 each coordinate ATP.

The protein belongs to the UMP kinase family. Homohexamer.

Its subcellular location is the cytoplasm. The catalysed reaction is UMP + ATP = UDP + ADP. It functions in the pathway pyrimidine metabolism; CTP biosynthesis via de novo pathway; UDP from UMP (UMPK route): step 1/1. Allosterically activated by GTP. Inhibited by UTP. In terms of biological role, catalyzes the reversible phosphorylation of UMP to UDP. This Brucella anthropi (strain ATCC 49188 / DSM 6882 / CCUG 24695 / JCM 21032 / LMG 3331 / NBRC 15819 / NCTC 12168 / Alc 37) (Ochrobactrum anthropi) protein is Uridylate kinase.